The following is a 913-amino-acid chain: Probable TonB-dependent receptor HI_1217 (913 aa).

The signal sequence occupies residues 1–27 (MKKAIKLNLITLGLINTIGMTITQAQA). A TBDR plug domain is found at 42 to 165 (SNDKKPFTEA…LAGSANFRTL (124 aa)). A TBDR beta-barrel domain is found at 176–913 (PFGIILKGMT…TYILSLNYKF (738 aa)). The TonB C-terminal box signature appears at 896 to 913 (LYNFARGRTYILSLNYKF).

The protein belongs to the TonB-dependent receptor family.

It localises to the cell outer membrane. In terms of biological role, probable receptor, TonB-dependent. This is Probable TonB-dependent receptor HI_1217 from Haemophilus influenzae (strain ATCC 51907 / DSM 11121 / KW20 / Rd).